We begin with the raw amino-acid sequence, 351 residues long: UDP-3-O-acylglucosamine N-acyltransferase (351 aa).

Catalysis depends on H257, which acts as the Proton acceptor.

Belongs to the transferase hexapeptide repeat family. LpxD subfamily. Homotrimer.

The enzyme catalyses a UDP-3-O-[(3R)-3-hydroxyacyl]-alpha-D-glucosamine + a (3R)-hydroxyacyl-[ACP] = a UDP-2-N,3-O-bis[(3R)-3-hydroxyacyl]-alpha-D-glucosamine + holo-[ACP] + H(+). The protein operates within bacterial outer membrane biogenesis; LPS lipid A biosynthesis. In terms of biological role, catalyzes the N-acylation of UDP-3-O-acylglucosamine using 3-hydroxyacyl-ACP as the acyl donor. Is involved in the biosynthesis of lipid A, a phosphorylated glycolipid that anchors the lipopolysaccharide to the outer membrane of the cell. This Brucella abortus (strain S19) protein is UDP-3-O-acylglucosamine N-acyltransferase.